The sequence spans 209 residues: High frequency lysogenization protein HflD homolog (209 aa).

Belongs to the HflD family.

The protein localises to the cytoplasm. The protein resides in the cell inner membrane. The polypeptide is High frequency lysogenization protein HflD homolog (Sodalis glossinidius (strain morsitans)).